The chain runs to 108 residues: UPF0060 membrane protein RHOS4_03690 (108 aa).

4 helical membrane passes run 5 to 25 (LAAYAGAALAEIAGCFAVWAW), 32 to 52 (ALWLVPGALSLGTFAWLLALT), 62 to 82 (AVYGGVYVAASLLWLWAVEGV), and 86 to 106 (RWDMGGAALVLAGAAVILWAP).

Belongs to the UPF0060 family.

Its subcellular location is the cell inner membrane. The chain is UPF0060 membrane protein RHOS4_03690 from Cereibacter sphaeroides (strain ATCC 17023 / DSM 158 / JCM 6121 / CCUG 31486 / LMG 2827 / NBRC 12203 / NCIMB 8253 / ATH 2.4.1.) (Rhodobacter sphaeroides).